We begin with the raw amino-acid sequence, 262 residues long: 14-3-3 protein homolog (262 aa).

It belongs to the 14-3-3 family.

This is 14-3-3 protein homolog from Trichoderma harzianum (Hypocrea lixii).